Consider the following 252-residue polypeptide: Protein UL24 homolog (252 aa).

The tract at residues 215 to 252 is disordered; sequence SVLTKTSGENRSRASRQVAKNAPKNRIRRTAKKDAKRQ. Residues 237–252 are compositionally biased toward basic residues; sequence PKNRIRRTAKKDAKRQ.

Belongs to the herpesviridae UL24 family.

The protein resides in the virion. The protein localises to the host cytoplasm. Its subcellular location is the host nucleus. It is found in the host nucleolus. It localises to the host Golgi apparatus. In terms of biological role, may participate in nuclear egress of viral particles. Plays a role in the dispersal of several host nucleolar proteins including NCL/nucleolin and NPM1. Since deletion of host NCL/nucleolin negatively impact on nuclear egress, UL24 supposedly acts on this process through its effect on host nucleoli. The polypeptide is Protein UL24 homolog (U49) (Homo sapiens (Human)).